A 154-amino-acid polypeptide reads, in one-letter code: SsrA-binding protein (154 aa).

It belongs to the SmpB family.

It is found in the cytoplasm. In terms of biological role, required for rescue of stalled ribosomes mediated by trans-translation. Binds to transfer-messenger RNA (tmRNA), required for stable association of tmRNA with ribosomes. tmRNA and SmpB together mimic tRNA shape, replacing the anticodon stem-loop with SmpB. tmRNA is encoded by the ssrA gene; the 2 termini fold to resemble tRNA(Ala) and it encodes a 'tag peptide', a short internal open reading frame. During trans-translation Ala-aminoacylated tmRNA acts like a tRNA, entering the A-site of stalled ribosomes, displacing the stalled mRNA. The ribosome then switches to translate the ORF on the tmRNA; the nascent peptide is terminated with the 'tag peptide' encoded by the tmRNA and targeted for degradation. The ribosome is freed to recommence translation, which seems to be the essential function of trans-translation. This is SsrA-binding protein from Methylobacillus flagellatus (strain ATCC 51484 / DSM 6875 / VKM B-1610 / KT).